The primary structure comprises 679 residues: HEAT repeat-containing protein 3 (679 aa).

The segment covering 1–11 (MGKSRTKRFKR) has biased composition (basic residues). The interval 1 to 40 (MGKSRTKRFKRPQFSPIESCQAEAAAASNGTGDEEDDGPA) is disordered. The residue at position 15 (Ser-15) is a Phosphoserine. HEAT repeat units follow at residues 38–69 (GPAA…VQQR) and 74–110 (DLAR…SACG). Ser-144 is modified (phosphoserine). Position 339 is a phosphothreonine (Thr-339).

It belongs to the nuclear import and ribosome assembly adapter family. Component of a hexameric 5S RNP precursor complex, composed of 5S RNA, RRS1, RPF2/BXDC1, RPL5, RPL11 and HEATR3; this complex acts as a precursor for ribosome assembly.

Plays a role in ribosome biogenesis and in nuclear import of the 60S ribosomal protein L5/large ribosomal subunit protein uL18 (RPL5). Required for proper erythrocyte maturation. The protein is HEAT repeat-containing protein 3 (Heatr3) of Mus musculus (Mouse).